Reading from the N-terminus, the 317-residue chain is Transcription cofactor vestigial-like protein 2 (317 aa).

Disordered regions lie at residues 41 to 76 (CNASPSSSGSGSSSFSSQTPASIKEEEGSPEKERPP), 108 to 128 (SQPSSYSPSCTSSKAPRSSGP), 191 to 214 (TEPWHHAHPHHAHPHHPYALGGAL), and 253 to 293 (RLAT…PSGD). Positions 44-57 (SPSSSGSGSSSFSS) are enriched in low complexity. Residues 63 to 76 (IKEEEGSPEKERPP) are compositionally biased toward basic and acidic residues. The span at 108–120 (SQPSSYSPSCTSS) shows a compositional bias: low complexity. The segment covering 196 to 206 (HAHPHHAHPHH) has biased composition (basic residues). Low complexity predominate over residues 272–292 (KGEPAGAAWAGPGGPFASPSG).

Belongs to the vestigial family. As to quaternary structure, interacts with TEFs. Binds to TEAD1/TEF1. As to expression, skeletal muscle.

The protein localises to the nucleus. In terms of biological role, may act as a specific coactivator for the mammalian TEFs. May play a role in the development of skeletal muscles. This Homo sapiens (Human) protein is Transcription cofactor vestigial-like protein 2 (VGLL2).